The following is a 316-amino-acid chain: Porphobilinogen deaminase (316 aa).

Cysteine 249 is subject to S-(dipyrrolylmethanemethyl)cysteine.

This sequence belongs to the HMBS family. As to quaternary structure, monomer. Dipyrromethane serves as cofactor.

The enzyme catalyses 4 porphobilinogen + H2O = hydroxymethylbilane + 4 NH4(+). Its pathway is porphyrin-containing compound metabolism; protoporphyrin-IX biosynthesis; coproporphyrinogen-III from 5-aminolevulinate: step 2/4. Functionally, tetrapolymerization of the monopyrrole PBG into the hydroxymethylbilane pre-uroporphyrinogen in several discrete steps. The chain is Porphobilinogen deaminase from Nitrobacter winogradskyi (strain ATCC 25391 / DSM 10237 / CIP 104748 / NCIMB 11846 / Nb-255).